The chain runs to 218 residues: Large ribosomal subunit protein uL3 (218 aa).

It belongs to the universal ribosomal protein uL3 family. As to quaternary structure, part of the 50S ribosomal subunit. Forms a cluster with proteins L14 and L19.

One of the primary rRNA binding proteins, it binds directly near the 3'-end of the 23S rRNA, where it nucleates assembly of the 50S subunit. The protein is Large ribosomal subunit protein uL3 of Corynebacterium urealyticum (strain ATCC 43042 / DSM 7109).